The chain runs to 329 residues: Malate dehydrogenase (329 aa).

Glycine 12–glycine 18 contacts NAD(+). Substrate contacts are provided by arginine 95 and arginine 101. Residues asparagine 108, glutamine 115, and valine 132–asparagine 134 each bind NAD(+). Residues asparagine 134 and arginine 165 each coordinate substrate. Histidine 190 acts as the Proton acceptor in catalysis.

This sequence belongs to the LDH/MDH superfamily. MDH type 2 family. Homodimer.

The catalysed reaction is (S)-malate + NAD(+) = oxaloacetate + NADH + H(+). Substrate inhibition is observed at high concentrations of oxaloacetate. Functionally, catalyzes the reversible oxidation of malate to oxaloacetate. Catalyzes the reduction of oxaloacetate more efficiently than the oxidation of malate. The protein is Malate dehydrogenase of Syntrophobacter fumaroxidans (strain DSM 10017 / MPOB).